Reading from the N-terminus, the 1275-residue chain is MKRIPRKTRGKSSGKGNDSTERADDGSAQLRDKQSSKVTQNVKEPGTTLKEQYKTRPSLQTVQKATENAELPMQTNDEGAVDKKGNTKGDKTNEHVEAEVNAADATKRQAKDTDKQKAQVTYNDTGINNANELSRSGNVDNEGGDNQKPMTTRIAEATSAIISKHPARVGLPPTASSGHGYQCHVCSAVLFSPLDLDAHVASHGLHGNMTLTSSEIQRHITEFISSWQNHPIVQVSADVENKKTAQLLHADTPRLVTWDAGLCTSFKIVPIVPAQVPQDVLAYTFFTSSYAIQSPFPEAAVSRIVVHTRWASNVDFDRDSSVIMAPPTENNIHLFKQLLNNETLSVRGANPLMFRANVLHMLLEFVLDNLYINKHTGFSQDHTPFTEGANLRSLPGPDAEKWYAIMYPTRMGTPNVSKICNFVASCVRNRVGRFDRAQMMNGAMSEWVDVFETSDALTVSIRGRWMARLARMNINPTEIEWALTECAHGYVTVTSPYAPSVNRLMPYRVSNAERQISQIIRIMNIGNNATVIQPVLQDISVLLQRISPLQIDPTIISNTMSTVSESTTQTLSPASSILGKLRPSNSDFSSFRVALAGWLYNGVVTTVIDDSSYPKDGGSVTSLENLWDFFILALALPLTTDPCAPVKAFMTLANMMVGFETIPMDNQIYTQSRRASAFSTPHTWPRCFMNIQLISPIDAPILRQWAEIIHRYWPNPSQIRFGAPNVFGSANLFTPPEVLLLPIDHQPANVTTPTLDFTNELTNWRARVCELMKNLVDNQRYQPGWTQSLVSSMRGTLDKLKLIKSMTPMYLQQLAPVELAVIAPMLPFPPFQVPYVRLDRDRVPTMVGVTRQSRDTITQPALSLSTTNTTVGVPLALDARAITVALLSGKYPSDLVTNVWYADAIYPMYADTEVFSNLQRDMITCEAVQTLITLVAQISETQYPVDRYLDWIPSLRASAATAATFAEWVNTSMKTAFDLSDMLLEPLLSGDPRMSQLAIQYQQYNGRTFNVIPEMPGSVVTDCVQLTAEVFNHEYNLFGIARGDIIIGRVQSTHLWSPLAPPPDLVFDRDTPGVHVFGRDCRISFGMNGAAPMIRDETGMMVPFEGNWIFPLALWQMNTRYFNQQFDAWIKTGELRIRIEMGAYPYMLHYYDPRQYANAWNLTSAWLEEISPTSIPSVPFMVPISSDHDISSAPAVQYIISTEYNDRSLFCTNSSSPQTIAGPDKHIPVERYNILTNPDAPPTQIQLPEVVDLYNVVTRYAYETPPITAVVMGVP.

Positions 1–12 are enriched in basic residues; it reads MKRIPRKTRGKS. The disordered stretch occupies residues 1 to 147; sequence MKRIPRKTRG…NVDNEGGDNQ (147 aa). Over residues 18-35 the composition is skewed to basic and acidic residues; that stretch reads DSTERADDGSAQLRDKQS. A compositionally biased stretch (polar residues) spans 55–66; that stretch reads TRPSLQTVQKAT. Basic and acidic residues-rich tracts occupy residues 80–98 and 105–117; these read AVDK…HVEA and ATKR…DKQK. Residues 118–139 show a composition bias toward polar residues; that stretch reads AQVTYNDTGINNANELSRSGNV. A C2H2-type zinc finger spans residues 181 to 203; the sequence is YQCHVCSAVLFSPLDLDAHVASH.

This sequence belongs to the turreted BTV-fold inner capsid family. In terms of assembly, homodecamer; each decamer is made up of two conformers of VP2, called VP2A and VP2B. 12 homodecamers assemble to form an icosahedral capsid. Interacts with protein mu-NS; in viral inclusions. The cofactor is Mg(2+). Requires Mn(2+) as cofactor.

The protein localises to the virion. The catalysed reaction is ATP + H2O = ADP + phosphate + H(+). Functionally, inner capsid protein that self-assembles to form an icosahedral capsid with a T=2 symmetry, which consists of 120 copies of VP2, with channels at each of its five-fold vertices. This capsid constitutes the innermost concentric layer of the viral mature particle. Its function is as follows. Displays NTPase, RNA 5'-triphosphatase (RTPase) and RNA helicase activities and probably participates in transcription of the viral genome. Helicase activity might be involved in unwinding or reannealing dsRNA during RNA synthesis. RTPase enzymatic activity represents the first step in RNA capping, which yields a 5'-diphosphorylated plus-strand RNA. This is Inner capsid protein lambda-1 from Reovirus type 2 (strain D5/Jones) (T2J).